Here is a 441-residue protein sequence, read N- to C-terminus: Transcription factor bHLH90 (441 aa).

The region spanning 260–309 (NFKSKNLHSERKRRERINQAMYGLRAVVPKITKLNKIGIFSDAVDYINEL) is the bHLH domain.

In terms of assembly, homodimer. Expressed constitutively in roots, leaves, stems, and flowers.

It localises to the nucleus. In Arabidopsis thaliana (Mouse-ear cress), this protein is Transcription factor bHLH90 (BHLH90).